Consider the following 513-residue polypeptide: Na(+)/H(+) antiporter NhaB (513 aa).

12 consecutive transmembrane segments (helical) span residues 23–43, 52–72, 97–117, 120–140, 144–164, 202–222, 238–258, 303–323, 348–368, 391–411, 447–467, and 475–495; these read LALI…PFVA, IFTL…LLAI, LLLM…LFIF, LLLS…AAAF, FLDA…FYGI, LMMH…VGEP, FFLR…LTCL, AIIG…VGLI, TESL…AVII, LFYI…VGTI, ATPN…APLI, and VWMA…CVEF.

This sequence belongs to the NhaB Na(+)/H(+) (TC 2.A.34) antiporter family.

The protein localises to the cell inner membrane. It catalyses the reaction 2 Na(+)(in) + 3 H(+)(out) = 2 Na(+)(out) + 3 H(+)(in). Its function is as follows. Na(+)/H(+) antiporter that extrudes sodium in exchange for external protons. The polypeptide is Na(+)/H(+) antiporter NhaB (Shigella flexneri serotype 5b (strain 8401)).